Reading from the N-terminus, the 275-residue chain is Gamma carbonic anhydrase 1, mitochondrial (275 aa).

A mitochondrion-targeting transit peptide spans 1–43 (MGTLGRAFYSVGFWIRETGQALDRLGCRLQGKNYFREQLSRHR). Substrate-binding positions include 86–88 (RGD) and 101–102 (QD). Positions 107, 130, and 135 each coordinate Zn(2+). Asn-209 lines the substrate pocket. The interval 256 to 275 (LNLPNNILPDKETKRPSNVN) is disordered. The segment covering 264-275 (PDKETKRPSNVN) has biased composition (basic and acidic residues).

It belongs to the gamma-class carbonic anhydrase family. As to quaternary structure, homotrimer. Component of the mitochondrial oxidoreductase respiratory chain complex I; element of the extra matrix-exposed domain, which is attached to the membrane arm of this complex. Requires Zn(2+) as cofactor.

It localises to the mitochondrion membrane. Enzyme involved in the catabolism of H(2)CO(3) but that does not mediates the reversible hydration of carbon dioxide. Mediates complex I assembly in mitochondria and respiration. The polypeptide is Gamma carbonic anhydrase 1, mitochondrial (GAMMACA1) (Arabidopsis thaliana (Mouse-ear cress)).